A 397-amino-acid polypeptide reads, in one-letter code: Argininosuccinate synthase (397 aa).

7–15 (LYSGGLDTS) contacts ATP. Y83 serves as a coordination point for L-citrulline. G113 contributes to the ATP binding site. The L-aspartate site is built by T115, N119, and D120. L-citrulline is bound at residue N119. 5 residues coordinate L-citrulline: R123, S169, S178, E253, and Y265.

This sequence belongs to the argininosuccinate synthase family. Type 1 subfamily. As to quaternary structure, homotetramer.

It localises to the cytoplasm. It catalyses the reaction L-citrulline + L-aspartate + ATP = 2-(N(omega)-L-arginino)succinate + AMP + diphosphate + H(+). It participates in amino-acid biosynthesis; L-arginine biosynthesis; L-arginine from L-ornithine and carbamoyl phosphate: step 2/3. The protein is Argininosuccinate synthase of Thermoplasma volcanium (strain ATCC 51530 / DSM 4299 / JCM 9571 / NBRC 15438 / GSS1).